The following is a 153-amino-acid chain: Type II secretion system core protein G (153 aa).

The propeptide at 1-7 (MERRQRG) is leader sequence. Phenylalanine 8 bears the N-methylphenylalanine mark. A helical membrane pass occupies residues 8-28 (FTLLEIMVVIVILGVLASLVV). Disordered stretches follow at residues 68 to 91 (EQGL…PQDG) and 126 to 153 (MPDT…NGNP). The segment covering 134–143 (GNWNVGNGAH) has biased composition (low complexity). The span at 144-153 (NNGGNGNGNP) shows a compositional bias: gly residues.

This sequence belongs to the GSP G family. Type II secretion system is composed of four main components: the outer membrane complex, the inner membrane complex, the cytoplasmic secretion ATPase and the periplasm-spanning pseudopilus. Forms homomultimers. Cleaved by the prepilin peptidase. Post-translationally, methylated by prepilin peptidase at the amino group of the N-terminal phenylalanine once the leader sequence is cleaved.

It localises to the cell inner membrane. In terms of biological role, core component of the type II secretion system required for the energy-dependent secretion of extracellular factors such as proteases and toxins from the periplasm. Pseudopilin (pilin-like) protein that polymerizes to form the pseudopilus. Further polymerization triggers pseudopilus growth. This chain is Type II secretion system core protein G (outG), found in Dickeya chrysanthemi (Pectobacterium chrysanthemi).